Reading from the N-terminus, the 113-residue chain is UPF0482 protein YnfB (113 aa).

The first 28 residues, 1–28 (MNNTLSKRLCLTAMLTLAAVVYTTSAFA), serve as a signal peptide directing secretion.

Belongs to the UPF0482 family.

This is UPF0482 protein YnfB from Salmonella agona (strain SL483).